The sequence spans 1780 residues: Protein TIC 214 (1780 aa).

The next 6 membrane-spanning stretches (helical) occupy residues 19 to 39 (IINS…FSIG), 68 to 88 (FIAG…HLAL), 91 to 111 (PHTI…WNNN), 133 to 153 (VFLN…SSML), 176 to 196 (VGWL…LVWI), and 227 to 247 (IFSI…PSPI). The disordered stretch occupies residues 251-275 (KLKGTSETEERGGTKQDQEVSTEEA). Residues 254-268 (GTSETEERGGTKQDQ) are compositionally biased toward basic and acidic residues.

Belongs to the TIC214 family. Part of the Tic complex.

It localises to the plastid. It is found in the chloroplast inner membrane. Its function is as follows. Involved in protein precursor import into chloroplasts. May be part of an intermediate translocation complex acting as a protein-conducting channel at the inner envelope. The protein is Protein TIC 214 of Draba nemorosa (Woodland whitlowgrass).